Consider the following 144-residue polypeptide: Maximins 8/H7 (144 aa).

The first 18 residues, 1 to 18 (MKFKYIVAVSFLIASAYA), serve as a signal peptide directing secretion. Residues 19–43 (RSEENDEQSLSQRDVLEEESLREIR) constitute a propeptide that is removed on maturation. At asparagine 70 the chain carries Asparagine amide. The propeptide occupies 74-123 (TAEDHEVMKRLEAVMRDLDSLDYPEEASERETRGFNQEEIANLFTKKEKR). Leucine 143 is subject to Leucine amide.

It belongs to the bombinin family. Expressed by the skin glands.

The protein localises to the secreted. In terms of biological role, maximin-8 shows antimicrobial activity against bacteria and against the fungus C.albicans. It has little hemolytic activity. Its function is as follows. Maximin-H7 shows antimicrobial activity against bacteria and against the fungus C.albicans. Shows strong hemolytic activity. This is Maximins 8/H7 from Bombina maxima (Giant fire-bellied toad).